Reading from the N-terminus, the 788-residue chain is Multifunctional tryptophan biosynthesis protein (788 aa).

The 196-residue stretch at 12 to 207 (DILMIDNFDS…MKLKGGTWEE (196 aa)) folds into the Glutamine amidotransferase type-1 domain. Residue 63–65 (GPG) participates in L-glutamine binding. The active-site Nucleophile; for GATase activity is C91. 141 to 142 (SL) is an L-glutamine binding site. Residues H181 and E183 each act as for GATase activity in the active site. The interval 238 to 503 (ILEKICAQRQ…DTRAFIRQLL (266 aa)) is indole-3-glycerol phosphate synthase. The segment at 520-788 (LSRSCGIRTE…RAFVKAAKKL (269 aa)) is N-(5'-phosphoribosyl)anthranilate isomerase.

The enzyme catalyses N-(5-phospho-beta-D-ribosyl)anthranilate = 1-(2-carboxyphenylamino)-1-deoxy-D-ribulose 5-phosphate. It carries out the reaction 1-(2-carboxyphenylamino)-1-deoxy-D-ribulose 5-phosphate + H(+) = (1S,2R)-1-C-(indol-3-yl)glycerol 3-phosphate + CO2 + H2O. It catalyses the reaction chorismate + L-glutamine = anthranilate + pyruvate + L-glutamate + H(+). It functions in the pathway amino-acid biosynthesis; L-tryptophan biosynthesis; L-tryptophan from chorismate: step 1/5. Its pathway is amino-acid biosynthesis; L-tryptophan biosynthesis; L-tryptophan from chorismate: step 3/5. It participates in amino-acid biosynthesis; L-tryptophan biosynthesis; L-tryptophan from chorismate: step 4/5. Trifunctional enzyme bearing the Gln amidotransferase (GATase) domain of anthranilate synthase, indole-glycerolphosphate synthase, and phosphoribosylanthranilate isomerase activities. The chain is Multifunctional tryptophan biosynthesis protein (TRPC) from Phanerodontia chrysosporium (White-rot fungus).